Reading from the N-terminus, the 112-residue chain is MKQAIVARADLRMGKGKLAAQVAHASLSAVEDTGTRSEKQWKGGGQKKIVLKANSEKKLFQLADEAERDGIPHAVVRDAGHTQLEPGTVTCIAIGPDSDENIDRITGSLSLY.

It belongs to the PTH2 family.

The protein resides in the cytoplasm. It catalyses the reaction an N-acyl-L-alpha-aminoacyl-tRNA + H2O = an N-acyl-L-amino acid + a tRNA + H(+). Its function is as follows. The natural substrate for this enzyme may be peptidyl-tRNAs which drop off the ribosome during protein synthesis. This chain is Peptidyl-tRNA hydrolase, found in Haloquadratum walsbyi (strain DSM 16790 / HBSQ001).